The sequence spans 92 residues: Small ribosomal subunit protein uS19 (92 aa).

The protein belongs to the universal ribosomal protein uS19 family.

Functionally, protein S19 forms a complex with S13 that binds strongly to the 16S ribosomal RNA. The sequence is that of Small ribosomal subunit protein uS19 from Aliivibrio salmonicida (strain LFI1238) (Vibrio salmonicida (strain LFI1238)).